Here is a 288-residue protein sequence, read N- to C-terminus: Diaminopimelate epimerase (288 aa).

Substrate-binding residues include N17, Q47, and N67. The Proton donor role is filled by C76. Residues 77 to 78 (GN), N164, N197, and 215 to 216 (ER) contribute to the substrate site. C224 acts as the Proton acceptor in catalysis. 225-226 (GS) lines the substrate pocket.

This sequence belongs to the diaminopimelate epimerase family. Homodimer.

It is found in the cytoplasm. It catalyses the reaction (2S,6S)-2,6-diaminopimelate = meso-2,6-diaminopimelate. It functions in the pathway amino-acid biosynthesis; L-lysine biosynthesis via DAP pathway; DL-2,6-diaminopimelate from LL-2,6-diaminopimelate: step 1/1. Catalyzes the stereoinversion of LL-2,6-diaminopimelate (L,L-DAP) to meso-diaminopimelate (meso-DAP), a precursor of L-lysine and an essential component of the bacterial peptidoglycan. In Rhodopseudomonas palustris (strain BisA53), this protein is Diaminopimelate epimerase.